A 268-amino-acid polypeptide reads, in one-letter code: Agamous-like MADS-box protein AGL15 (268 aa).

The MADS-box domain occupies 1–61 (MGRGKIEIKR…GKLFEYSSTG (61 aa)). Positions 80–170 (AEEDCAEVDI…RRQVQELRSF (91 aa)) constitute a K-box domain. The interval 205-268 (TDSDTTLQLG…PEAKRQRFSV (64 aa)) is disordered. The span at 218–232 (EAHDRRTNEGERESP) shows a compositional bias: basic and acidic residues. Residues 233–244 (SSDSVTTNTSSE) show a composition bias toward polar residues.

In terms of assembly, homodimer. Interacts with SVP, AGL24, AP1, AGL6, AG, AGL1, AGL11, AGL5, AGL16, SOC1 and AGL21. Expressed at low levels in flowers and siliques. Also present in seedlings. Detected during embryogenesis and accumulates during early seed development (at protein level). Expressed in shoot apices and the base of leaf petioles.

Its subcellular location is the nucleus. The protein resides in the cytoplasm. Its function is as follows. Transcription factor involved in the negative regulation of flowering, probably through the photoperiodic pathway. Acts both as an activator and as a repressor of transcription. Binds DNA in a sequence-specific manner in large CArG motif 5'-CC (A/T)8 GG-3'. Participates probably in the regulation of programs active during the early stages of embryo development. Prevents premature perianth senescence and abscission, fruits development and seed desiccation. Stimulates the expression of at least DTA4, LEC2, FUS3, ABI3, AT4G38680/CSP2 and GRP2B/CSP4. Can enhance somatic embryo development in vitro. In Arabidopsis thaliana (Mouse-ear cress), this protein is Agamous-like MADS-box protein AGL15 (AGL15).